Reading from the N-terminus, the 409-residue chain is tRNA(Met) cytidine acetate ligase (409 aa).

Residues V7 to H20, G102, N169, and R194 each bind ATP.

This sequence belongs to the TmcAL family.

The protein localises to the cytoplasm. The catalysed reaction is cytidine(34) in elongator tRNA(Met) + acetate + ATP = N(4)-acetylcytidine(34) in elongator tRNA(Met) + AMP + diphosphate. Its function is as follows. Catalyzes the formation of N(4)-acetylcytidine (ac(4)C) at the wobble position of elongator tRNA(Met), using acetate and ATP as substrates. First activates an acetate ion to form acetyladenylate (Ac-AMP) and then transfers the acetyl group to tRNA to form ac(4)C34. The sequence is that of tRNA(Met) cytidine acetate ligase from Clostridium botulinum (strain Loch Maree / Type A3).